The primary structure comprises 335 residues: Probable phosphoglycerate mutase ARB_03491 (335 aa).

A signal peptide spans 1–24 (MAGRILLGLTLLATSLPLLAMGDA). The active-site Tele-phosphohistidine intermediate is the His108. Catalysis depends on Glu211, which acts as the Proton donor/acceptor.

This sequence belongs to the phosphoglycerate mutase family.

Its subcellular location is the secreted. Functionally, probable phosphomutase that may have a function related to the manipulation of phosphate groups on carbohydrates. This is Probable phosphoglycerate mutase ARB_03491 from Arthroderma benhamiae (strain ATCC MYA-4681 / CBS 112371) (Trichophyton mentagrophytes).